The following is a 270-amino-acid chain: MSKIAKTAIISPKAEIGKGVEIGEFCVIGDGVKLDEGVKLHNNVTLQGHTFIGKNTEIFPFAVLGTQPQDLKYKGEYSELMVGEDNLIREFCMINPGTEGGIKKTLIGDKNLLMAYVHVAHDCVIGSHCILANGVTLAGHIEIGDYVNIGGLTAIHQFVRIAKGCMIAGKSALGKDVPPYCTVEGNRAFIRGLNRHRMRQLLESKDIDFIHALYKRLFRPIPSLRESAKLELEEHANNPFVKEICSFILESSRGVAYKSSEYSSEEKQEE.

The protein belongs to the transferase hexapeptide repeat family. LpxA subfamily. Homotrimer.

It localises to the cytoplasm. The catalysed reaction is a (3R)-hydroxyacyl-[ACP] + UDP-N-acetyl-alpha-D-glucosamine = a UDP-3-O-[(3R)-3-hydroxyacyl]-N-acetyl-alpha-D-glucosamine + holo-[ACP]. It participates in glycolipid biosynthesis; lipid IV(A) biosynthesis; lipid IV(A) from (3R)-3-hydroxytetradecanoyl-[acyl-carrier-protein] and UDP-N-acetyl-alpha-D-glucosamine: step 1/6. Involved in the biosynthesis of lipid A, a phosphorylated glycolipid that anchors the lipopolysaccharide to the outer membrane of the cell. This is Acyl-[acyl-carrier-protein]--UDP-N-acetylglucosamine O-acyltransferase from Helicobacter pylori (strain J99 / ATCC 700824) (Campylobacter pylori J99).